Reading from the N-terminus, the 432-residue chain is Serine hydroxymethyltransferase (432 aa).

(6S)-5,6,7,8-tetrahydrofolate contacts are provided by residues Leu127 and 131 to 133 (GHL). An N6-(pyridoxal phosphate)lysine modification is found at Lys236.

This sequence belongs to the SHMT family. As to quaternary structure, homodimer. It depends on pyridoxal 5'-phosphate as a cofactor.

It is found in the cytoplasm. The catalysed reaction is (6R)-5,10-methylene-5,6,7,8-tetrahydrofolate + glycine + H2O = (6S)-5,6,7,8-tetrahydrofolate + L-serine. It participates in one-carbon metabolism; tetrahydrofolate interconversion. It functions in the pathway amino-acid biosynthesis; glycine biosynthesis; glycine from L-serine: step 1/1. Its function is as follows. Catalyzes the reversible interconversion of serine and glycine with tetrahydrofolate (THF) serving as the one-carbon carrier. This reaction serves as the major source of one-carbon groups required for the biosynthesis of purines, thymidylate, methionine, and other important biomolecules. Also exhibits THF-independent aldolase activity toward beta-hydroxyamino acids, producing glycine and aldehydes, via a retro-aldol mechanism. The sequence is that of Serine hydroxymethyltransferase from Rhizobium rhizogenes (strain K84 / ATCC BAA-868) (Agrobacterium radiobacter).